We begin with the raw amino-acid sequence, 89 residues long: Small ribosomal subunit protein uS17 (89 aa).

Belongs to the universal ribosomal protein uS17 family. As to quaternary structure, part of the 30S ribosomal subunit.

One of the primary rRNA binding proteins, it binds specifically to the 5'-end of 16S ribosomal RNA. The protein is Small ribosomal subunit protein uS17 of Phytoplasma mali (strain AT).